A 504-amino-acid polypeptide reads, in one-letter code: Probable cytosol aminopeptidase (504 aa).

K268 and D273 together coordinate Mn(2+). K280 is an active-site residue. Mn(2+) contacts are provided by D291, D350, and E352. Residue R354 is part of the active site.

It belongs to the peptidase M17 family. The cofactor is Mn(2+).

It localises to the cytoplasm. The enzyme catalyses Release of an N-terminal amino acid, Xaa-|-Yaa-, in which Xaa is preferably Leu, but may be other amino acids including Pro although not Arg or Lys, and Yaa may be Pro. Amino acid amides and methyl esters are also readily hydrolyzed, but rates on arylamides are exceedingly low.. It catalyses the reaction Release of an N-terminal amino acid, preferentially leucine, but not glutamic or aspartic acids.. Functionally, presumably involved in the processing and regular turnover of intracellular proteins. Catalyzes the removal of unsubstituted N-terminal amino acids from various peptides. The polypeptide is Probable cytosol aminopeptidase (Psychromonas ingrahamii (strain DSM 17664 / CCUG 51855 / 37)).